The primary structure comprises 136 residues: MARTKQTARKSTGGKAPRKQLASKAARKAAPATGGVKKPHRYRPPTVALREIRRYQKSTELLIRKLPFQRLVREIAQDFKTDLRFQSSAIGALQEAVEAYLVSLFEDTNLCAIHGKRVTIQPKDMQLARRLRGERS.

The interval 1 to 45 (MARTKQTARKSTGGKAPRKQLASKAARKAAPATGGVKKPHRYRPP) is disordered. The residue at position 5 (K5) is an N6,N6,N6-trimethyllysine; alternate. An N6,N6-dimethyllysine; alternate modification is found at K5. An N6-methyllysine; alternate mark is found at K5 and K10. K10 is subject to N6-acetyllysine; alternate. A Phosphoserine modification is found at S11. The residue at position 15 (K15) is an N6,N6-dimethyllysine; alternate. K15, K19, K24, K28, and K37 each carry N6-acetyllysine; alternate. K19, K24, K28, and K37 each carry N6-methyllysine; alternate. Low complexity predominate over residues 19 to 32 (KQLASKAARKAAPA). K28 and K37 each carry N6,N6,N6-trimethyllysine; alternate. Residues K28 and K37 each carry the N6,N6-dimethyllysine; alternate modification. N6-acetyllysine occurs at positions 57 and 65. K80 carries the N6,N6,N6-trimethyllysine; alternate modification. K80 carries the N6,N6-dimethyllysine; alternate modification. At K80 the chain carries N6-methyllysine; alternate. N6-acetyllysine is present on K123.

The protein belongs to the histone H3 family. As to quaternary structure, the nucleosome is a histone octamer containing two molecules each of H2A, H2B, H3 and H4 assembled in one H3-H4 heterotetramer and two H2A-H2B heterodimers. The octamer wraps approximately 147 bp of DNA. Phosphorylated by ark1 to form H3S10ph in a cell cycle-dependent manner during mitosis and meiosis. H3S10ph is also formed by ssp2, promotes subsequent H3K14ac formation by gcn5, and is required for transcriptional activation through TBP recruitment to the promoters. Dephosphorylation is performed by sds21. In terms of processing, mono-, di- and trimethylated by the COMPASS complex to form H3K4me1/2/3. H3K4me activates gene expression by regulating transcription elongation and plays a role in telomere length maintenance. H3K4me enrichment correlates with transcription levels, and occurs in a 5' to 3' gradient with H3K4me3 enrichment at the 5'-end of genes, shifting to H3K4me2 and then H3K4me1. Methylated by clr4 to form H3K9me1. H3K9me1 represents a specific tag for epigenetic transcriptional repression by recruiting swi6/HP1 to methylated histones. Targeting to histone probably involves clr3 and rik1. Essential for silencing of centromeres and directional switching of the mating type. Methylated by set2 to form H3K36me. H3K36me represses gene expression. Methylated by dot1 to form H3K79me. H3K79me is required for association of SIR proteins with telomeric regions and for telomeric silencing. The COMPASS-mediated formation of H3K4me2/3 and the dot1-mediated formation of H3K79me require H2BK123ub1. Post-translationally, acetylation of histone H3 leads to transcriptional activation. H3K14ac formation by gcn5 is promoted by H3S10ph. H3K14ac can also be formed by esa1. H3K56ac formation occurs predominantly in newly synthesized H3 molecules during G1, S and G2/M of the cell cycle and may be involved in DNA repair. Acetylation at Lys-123 (H3K122ac) plays a central role in chromatin structure: localizes at the surface of the histone octamer and stimulates transcription, possibly by promoting nucleosome instability.

Its subcellular location is the nucleus. It localises to the chromosome. Functionally, core component of nucleosome. Nucleosomes wrap and compact DNA into chromatin, limiting DNA accessibility to the cellular machineries which require DNA as a template. Histones thereby play a central role in transcription regulation, DNA repair, DNA replication and chromosomal stability. DNA accessibility is regulated via a complex set of post-translational modifications of histones, also called histone code, and nucleosome remodeling. The sequence is that of Histone H3.3 (hht3) from Schizosaccharomyces pombe (strain 972 / ATCC 24843) (Fission yeast).